The sequence spans 210 residues: MKKEIASHLLEIGAVFLQPNDPFTWSSGIKSPIYCDNRLTLSYPKVRQAIAAGLEELIKEHFSTVEVIAGTATAGIAHAAWVSDRMDLPMCYVRSKAKGHGKGNQIEGKAEKGQKVVVVEDLISTGGSAITCVEALREAGCEVLGIVSIFTYELESGKEKLEAANVASYSLSDYSALTEVAAEKGMIGQAETKKLQEWRKNPANEAWITA.

5-phospho-alpha-D-ribose 1-diphosphate is bound by residues Arg-94, Lys-98, His-100, and 120-128 (EDLISTGGS). Ser-124 contributes to the orotate binding site.

The protein belongs to the purine/pyrimidine phosphoribosyltransferase family. PyrE subfamily. In terms of assembly, homodimer. It depends on Mg(2+) as a cofactor.

It carries out the reaction orotidine 5'-phosphate + diphosphate = orotate + 5-phospho-alpha-D-ribose 1-diphosphate. It functions in the pathway pyrimidine metabolism; UMP biosynthesis via de novo pathway; UMP from orotate: step 1/2. Catalyzes the transfer of a ribosyl phosphate group from 5-phosphoribose 1-diphosphate to orotate, leading to the formation of orotidine monophosphate (OMP). The protein is Orotate phosphoribosyltransferase of Bacillus mycoides (strain KBAB4) (Bacillus weihenstephanensis).